The sequence spans 213 residues: 3-isopropylmalate dehydratase small subunit (213 aa).

The protein belongs to the LeuD family. LeuD type 1 subfamily. Heterodimer of LeuC and LeuD.

The enzyme catalyses (2R,3S)-3-isopropylmalate = (2S)-2-isopropylmalate. It functions in the pathway amino-acid biosynthesis; L-leucine biosynthesis; L-leucine from 3-methyl-2-oxobutanoate: step 2/4. Functionally, catalyzes the isomerization between 2-isopropylmalate and 3-isopropylmalate, via the formation of 2-isopropylmaleate. The polypeptide is 3-isopropylmalate dehydratase small subunit (Pseudomonas syringae pv. tomato (strain ATCC BAA-871 / DC3000)).